We begin with the raw amino-acid sequence, 587 residues long: Inorganic phosphate transporter 2-1, chloroplastic (587 aa).

Residues 1 to 71 constitute a chloroplast transit peptide; the sequence is MTLPYRFSSV…VCPLASFSSY (71 aa). The tract at residues 74 to 106 is disordered; sequence SEGEEQHHADQPIQNPHESSTVSNESDGKGNAE. Residues 85 to 98 show a composition bias toward polar residues; that stretch reads PIQNPHESSTVSNE. 12 helical membrane-spanning segments follow: residues 127-147, 154-174, 195-215, 233-253, 265-285, 289-309, 327-347, 352-372, 413-433, 465-485, 523-543, and 559-579; these read AISIVIAFSALTLPIFMKSLG, TKLLSYATLLFGFYMAWNIGA, AVMTAAVLEFSGALLMGTHVT, MLLFAGLLSSLAAAGTWLQVA, CIVGSMVGFGLVYGGAGAVFW, AKVASSWVISPILGALVSFLV, AAAAAPVAVFVGVASISSAAL, IFPIALSQALACGVAGAIVFD, LEIVYGIFGYMQVLSACFMSF, IVIPMDVLAWGGFGIVAGLTM, LGLPISATHTLVGAVMGVGFA, and ASWLVTIPVGATLAVIYTWIF.

This sequence belongs to the inorganic phosphate transporter (PiT) (TC 2.A.20.2) family. Mostly expressed in young green tissues. Present in both auto- and heterotrophic tissues. Also expressed in root stele.

Its subcellular location is the plastid. The protein resides in the chloroplast inner membrane. Functionally, low affinity H(+)/Pi chloroplastic cotransporter. Involved in inorganic phosphate (orthophosphate, Pi) uptake in green parts of plants in Pi-sufficient conditions. Required for Pi retranslocation during Pi deprivation. The sequence is that of Inorganic phosphate transporter 2-1, chloroplastic (PHT2-1) from Arabidopsis thaliana (Mouse-ear cress).